The sequence spans 398 residues: Phospholipase C (398 aa).

An N-terminal signal peptide occupies residues 1–28; it reads MKKKFLKGLCCAFVISITCLGASSKAYG. The Zn(2+) site is built by Trp-29, His-39, Asp-84, His-96, His-154, Asp-158, His-164, His-176, and Glu-180. The Zn-dependent PLC domain occupies 29 to 278; sequence WDGKKDGTGT…YDVSKDLLPT (250 aa). Positions 275–283 are linker; sequence LLPTENHKI. Residues 284–398 enclose the PLAT domain; that stretch reads NGLMVVIKTA…IHGNEKYYIN (115 aa). Residues Gly-299, Thr-300, Asp-301, Asp-321, Asn-322, Gly-324, Asn-325, Asp-326, and Asp-364 each coordinate Ca(2+).

This sequence belongs to the bacterial zinc-metallophospholipase C family. Ca(2+) is required as a cofactor. The cofactor is Zn(2+).

Its subcellular location is the secreted. It catalyses the reaction a 1,2-diacyl-sn-glycero-3-phosphocholine + H2O = phosphocholine + a 1,2-diacyl-sn-glycerol + H(+). Its function is as follows. Bacterial hemolysins are exotoxins that attack blood cell membranes and cause cell rupture. Binds to eukaryotic membranes where it hydrolyzes phosphatidylcholine, sphingomyelin and phosphatidylethanolamine. The diacylglycerol produced can activate both the arachidonic acid pathway, leading to modulation of the inflammatory response cascade and thrombosis, and protein kinase C, leading to activation of eukaryotic phospholipases and further membrane damage. This enzyme is hemolytic against horse erythrocytes. The sequence is that of Phospholipase C (plc) from Clostridium novyi.